Consider the following 149-residue polypeptide: Calmodulin (149 aa).

Residue alanine 2 is modified to N-acetylalanine. EF-hand domains are found at residues 8 to 43 (EQIA…LGQN), 44 to 79 (PTEA…KMKD), 81 to 116 (DSEE…LGEK), and 117 to 149 (LTDE…MTSK). Residues aspartate 21, aspartate 23, aspartate 25, threonine 27, glutamate 32, aspartate 57, aspartate 59, aspartate 61, threonine 63, glutamate 68, aspartate 94, aspartate 96, aspartate 98, and glutamate 105 each coordinate Ca(2+). Lysine 116 is subject to N6,N6,N6-trimethyllysine. Positions 130, 132, 134, 136, and 141 each coordinate Ca(2+).

The protein belongs to the calmodulin family.

Calmodulin mediates the control of a large number of enzymes, ion channels and other proteins by Ca(2+). Among the enzymes to be stimulated by the calmodulin-Ca(2+) complex are a number of protein kinases and phosphatases. The chain is Calmodulin from Renilla reniformis (Sea pansy).